The following is a 938-amino-acid chain: AP-2 complex subunit alpha-2 (938 aa).

Residues 11–12, Lys-43, Tyr-53, and 57–61 contribute to the a 1,2-diacyl-sn-glycero-3-phospho-(1D-myo-inositol-3,4,5-trisphosphate) site; these read RG and KYVCK. Positions 615 to 681 are disordered; the sequence is LKKKKGPSTV…TGPPPSSGGG (67 aa). A compositionally biased stretch (low complexity) spans 646–667; that stretch reads PASTSAASTPSPSADLLGLGAV. Over residues 668 to 677 the composition is skewed to pro residues; that stretch reads PPAPTGPPPS.

The protein belongs to the adaptor complexes large subunit family. Adaptor protein complex 2 (AP-2) is a heterotetramer composed of two large adaptins (alpha-type subunit AP2A1 or AP2A2 and beta-type subunit AP2B1), a medium adaptin (mu-type subunit AP2M1) and a small adaptin (sigma-type subunit AP2S1). Interacts with clathrin. Binds EPN1, EPS15, AMPH, SNAP91 and BIN1. Interacts with HIP1. Interacts with DGKD. Interacts with DENND1A, DENND1B and DENND1C. Interacts with FCHO1 and DAB2. Interacts with ATAT1; this interaction is required for efficient alpha-tubulin acetylation by ATAT1. Interacts with KIAA1107. Together with AP2B1 and AP2M1, it interacts with ADAM10; this interaction facilitates ADAM10 endocytosis from the plasma membrane during long-term potentiation in hippocampal neurons. Interacts with CLN3 (via dileucine motif). Interacts with ABCB11; this interaction regulates cell membrane expression of ABCB11 through its internalization in a clathrin-dependent manner and its subsequent degradation. Interacts with Cacfd1. Interacts with DNAJC6. In terms of tissue distribution, widely expressed.

Its subcellular location is the cell membrane. The protein localises to the membrane. The protein resides in the coated pit. Component of the adaptor protein complex 2 (AP-2). Adaptor protein complexes function in protein transport via transport vesicles in different membrane traffic pathways. Adaptor protein complexes are vesicle coat components and appear to be involved in cargo selection and vesicle formation. AP-2 is involved in clathrin-dependent endocytosis in which cargo proteins are incorporated into vesicles surrounded by clathrin (clathrin-coated vesicles, CCVs) which are destined for fusion with the early endosome. The clathrin lattice serves as a mechanical scaffold but is itself unable to bind directly to membrane components. Clathrin-associated adaptor protein (AP) complexes which can bind directly to both the clathrin lattice and to the lipid and protein components of membranes are considered to be the major clathrin adaptors contributing the CCV formation. AP-2 also serves as a cargo receptor to selectively sort the membrane proteins involved in receptor-mediated endocytosis. AP-2 seems to play a role in the recycling of synaptic vesicle membranes from the presynaptic surface. AP-2 recognizes Y-X-X-[FILMV] (Y-X-X-Phi) and [ED]-X-X-X-L-[LI] endocytosis signal motifs within the cytosolic tails of transmembrane cargo molecules. AP-2 may also play a role in maintaining normal post-endocytic trafficking through the ARF6-regulated, non-clathrin pathway. During long-term potentiation in hippocampal neurons, AP-2 is responsible for the endocytosis of ADAM10. The AP-2 alpha subunit binds polyphosphoinositide-containing lipids, positioning AP-2 on the membrane. The AP-2 alpha subunit acts via its C-terminal appendage domain as a scaffolding platform for endocytic accessory proteins. The AP-2 alpha and AP-2 sigma subunits are thought to contribute to the recognition of the [ED]-X-X-X-L-[LI] motif. The chain is AP-2 complex subunit alpha-2 from Rattus norvegicus (Rat).